Here is a 314-residue protein sequence, read N- to C-terminus: 4-hydroxy-3-methylbut-2-enyl diphosphate reductase (314 aa).

Cys12 provides a ligand contact to [4Fe-4S] cluster. His41 and His74 together coordinate (2E)-4-hydroxy-3-methylbut-2-enyl diphosphate. Dimethylallyl diphosphate-binding residues include His41 and His74. Isopentenyl diphosphate contacts are provided by His41 and His74. Residue Cys96 participates in [4Fe-4S] cluster binding. (2E)-4-hydroxy-3-methylbut-2-enyl diphosphate is bound at residue His124. His124 contacts dimethylallyl diphosphate. Residue His124 participates in isopentenyl diphosphate binding. Glu126 serves as the catalytic Proton donor. Thr167 contacts (2E)-4-hydroxy-3-methylbut-2-enyl diphosphate. Residue Cys197 participates in [4Fe-4S] cluster binding. (2E)-4-hydroxy-3-methylbut-2-enyl diphosphate-binding residues include Ser225, Ser226, Asn227, and Ser269. Positions 225, 226, 227, and 269 each coordinate dimethylallyl diphosphate. Isopentenyl diphosphate is bound by residues Ser225, Ser226, Asn227, and Ser269.

Belongs to the IspH family. [4Fe-4S] cluster serves as cofactor.

It carries out the reaction isopentenyl diphosphate + 2 oxidized [2Fe-2S]-[ferredoxin] + H2O = (2E)-4-hydroxy-3-methylbut-2-enyl diphosphate + 2 reduced [2Fe-2S]-[ferredoxin] + 2 H(+). The enzyme catalyses dimethylallyl diphosphate + 2 oxidized [2Fe-2S]-[ferredoxin] + H2O = (2E)-4-hydroxy-3-methylbut-2-enyl diphosphate + 2 reduced [2Fe-2S]-[ferredoxin] + 2 H(+). The protein operates within isoprenoid biosynthesis; dimethylallyl diphosphate biosynthesis; dimethylallyl diphosphate from (2E)-4-hydroxy-3-methylbutenyl diphosphate: step 1/1. Its pathway is isoprenoid biosynthesis; isopentenyl diphosphate biosynthesis via DXP pathway; isopentenyl diphosphate from 1-deoxy-D-xylulose 5-phosphate: step 6/6. Its function is as follows. Catalyzes the conversion of 1-hydroxy-2-methyl-2-(E)-butenyl 4-diphosphate (HMBPP) into a mixture of isopentenyl diphosphate (IPP) and dimethylallyl diphosphate (DMAPP). Acts in the terminal step of the DOXP/MEP pathway for isoprenoid precursor biosynthesis. This chain is 4-hydroxy-3-methylbut-2-enyl diphosphate reductase, found in Aliivibrio fischeri (strain MJ11) (Vibrio fischeri).